A 1088-amino-acid polypeptide reads, in one-letter code: MAAVTGLYGSIDEFLNHCSQSGDSAYSALRSLLERLEKPDTRTEARIFLAHLQKKLDNDGASQRCLETYHFQIQDIYLDRNEGTGYQNRKKFTMMVIPSIFMPEDWSFTFYEGINRHPDSIFKDKTVAELGCGNGWISIAIAEKWLPLKVYGLDINPRAVKISWINLYLNAFDEDGQPVYDSESKTLLDRVEFYESDLLSYCRDNHIELERIVGCIPQILNPNPDAMSKLVTENASEEFLHSLSNYCALQGFVEDQFGLGLIARAVEEGIDVIKPMGIMIFNMGGRPGQGVCKRLFERRGLSVNKLWQTKILQASDTDISALVEIEKNNPHRFEFFMGLVGDRPICARTAWAFGKACGRISHALSVYSCQLRHPNEVKKIFEFLKNGFHDISNSLDLSFEDDSVADEKIPFLAYLAGVLKDGSRFPYEPPTGNKRFRDLIASFMKTYHHVPLSTDNVAIFPSRATAIENSLRLFTPRLAIVEEHLTCNLPRQWLTSLEIEQTRDSKTPIDGITVIEAPRQSDLMIELIKKLKPQVVVTGIAQFEAVTSSAFEHLLRVTREIGSRLFIDISDQFELSSLPSSIGVLKYLARTPLPSHAAIICGLLRNRVYTDLEVAFVISEEQTIFDALTRTVELLQGNTALISQYYYGCLFHELLSFQIPDRRQTAEREAENVEASDIDMIGFSSSAISVLSQSELSVRVTEKSSLLHMDVDQIFLPTPTPVKAAIFESFARQNVTETECDVTPILRQFILNTWNFSVEHSAEFIYADFPLALFNKLVLCCIEEGGSLCMPAGSNGNYAAAAKFLNANIMSIPTEAEVGFKLTAKQLSSVLETVHKPWVYISGPTINPTGLLYSNEEMKSLLTVCARYGARTIIDTSFSGIKFNSQDWDGWNLDASLAGLTGNPSFSVCLLGGLFFKIPTGGLSYGFLVLKSGFLADSFRSSFSGLNKPHNTVRYTAKKLLELGEQKGNLTGAAQGQEKLLATRLKRLKETLENCGWEVIEARGGVSVIAKPSAYLGKNIKLEKDGSTWVTKLDGTNIREAMLRATGLCINGPSWTGIPDYCRFTFALEDGDFDRALDCIVKFNQLVK.

Belongs to the class I-like SAM-binding methyltransferase superfamily. As to quaternary structure, homotetramer.

Its subcellular location is the cytoplasm. It catalyses the reaction L-methionine + S-adenosyl-L-methionine = S-methyl-L-methionine + S-adenosyl-L-homocysteine. Catalyzes the S-methylmethionine (SMM) biosynthesis from adenosyl-L-homocysteine (AdoMet) and methionine. SMM biosynthesis (by MMT1) and degradation (by HMT-1, HMT-2 and HMT-3) constitute the SMM cycle in plants, which is probably required to achieve short term control of AdoMet level. Also able to catalyze the selenium-methylmethionine (SeMM) from AdoMet and selenium-methionine (SeMet). May play a role in phoem sulfur transport; such function is however not essential. The polypeptide is Methionine S-methyltransferase (MMT1) (Wollastonia biflora (Beach sunflower)).